The sequence spans 427 residues: MSRSETLFANAQKHIPGGVNSPVRAFKSVGGTPLFFKHAEGAYVTDEDDKRYVDYVGSWGPMILGHSHPDVLDAVRKQLEHGLSYGAPTAMETEMADLVCAIVPSMEMVRMVSSGTEATMSAIRLARGFTGRDSIIKFEGCYHGHSDSLLVKAGSGLLTQGVPSSAGVPAAFAKHTLTLPFNDIAAVEQMLNEVGQDVACIIVEPVAGNMNCVPPAPGFLEGLREQCDKHGVVLIFDEVMTGFRVALGGAQAHYGVTPDLSTFGKIIGGGMPVGCFGGKREIMQHIAPLGPVYQAGTLSGNPLAMAAGLTTLRLISRPGFHAELTDYTTRLLDGLQQRADAAGIPFVTTQAGGMFGLYFSGADDIVTFDDVMGSDADLFKRFFHLMLEGGVYLAPSAFEAGFTSIAHGDAELKLTLDAAERAFAALK.

K265 bears the N6-(pyridoxal phosphate)lysine mark.

Belongs to the class-III pyridoxal-phosphate-dependent aminotransferase family. HemL subfamily. In terms of assembly, homodimer. The cofactor is pyridoxal 5'-phosphate.

The protein localises to the cytoplasm. It catalyses the reaction (S)-4-amino-5-oxopentanoate = 5-aminolevulinate. It functions in the pathway porphyrin-containing compound metabolism; protoporphyrin-IX biosynthesis; 5-aminolevulinate from L-glutamyl-tRNA(Glu): step 2/2. The polypeptide is Glutamate-1-semialdehyde 2,1-aminomutase (Pseudomonas fluorescens (strain SBW25)).